We begin with the raw amino-acid sequence, 475 residues long: Adenylyl cyclase-associated protein 1 (475 aa).

N-acetylalanine is present on Ala-2. Tyr-31 carries the post-translational modification Phosphotyrosine. Position 34 is a phosphoserine (Ser-34). Position 81 is an N6-acetyllysine (Lys-81). 2 disordered regions span residues 216–237 (ELSGLPSGPSAGSCPPPPPPCP) and 278–319 (MKTH…KKEP). Over residues 218–228 (SGLPSGPSAGS) the composition is skewed to low complexity. Lys-287 carries the N6-methyllysine modification. A phosphoserine mark is found at Ser-290, Ser-295, and Ser-301. Position 307 is a phosphothreonine (Thr-307). Phosphoserine is present on residues Ser-308 and Ser-310. A C-CAP/cofactor C-like domain is found at 319-453 (PAVLELEGKK…EGGDFNEFPV (135 aa)). Lys-348 is covalently cross-linked (Glycyl lysine isopeptide (Lys-Gly) (interchain with G-Cter in SUMO1)).

Belongs to the CAP family. Homodimer. Binds actin monomers.

It is found in the cell membrane. Directly regulates filament dynamics and has been implicated in a number of complex developmental and morphological processes, including mRNA localization and the establishment of cell polarity. The protein is Adenylyl cyclase-associated protein 1 (CAP1) of Homo sapiens (Human).